The primary structure comprises 263 residues: Oxidoreductase UcpA (263 aa).

10-32 lines the NAD(+) pocket; sequence LITGALQGIGEGIARTFARHGAN. S141 serves as a coordination point for substrate. Y155 serves as the catalytic Proton acceptor.

The protein belongs to the short-chain dehydrogenases/reductases (SDR) family.

The sequence is that of Oxidoreductase UcpA (ucpA) from Escherichia coli (strain K12).